The chain runs to 779 residues: Tricorn protease-interacting factor F3 (779 aa).

Substrate is bound by residues E102 and 231 to 235; that span reads GAMEN. Zn(2+) is bound at residue H266. Catalysis depends on E267, which acts as the Proton acceptor. Zn(2+)-binding residues include H270 and E289.

The protein belongs to the peptidase M1 family. Part of the tricorn proteolytic complex. It depends on Zn(2+) as a cofactor.

The protein resides in the cytoplasm. In terms of biological role, proteases F1, F2 and F3 degrade oligopeptides produced by Tricorn (themselves probably produced by the proteasome), yielding free amino acids. This Thermoplasma volcanium (strain ATCC 51530 / DSM 4299 / JCM 9571 / NBRC 15438 / GSS1) protein is Tricorn protease-interacting factor F3 (trf3).